The sequence spans 152 residues: Sec-independent protein translocase protein TatB (152 aa).

Residues 1 to 21 (MLDVGFGELFCFGIIALLVLG) form a helical membrane-spanning segment.

This sequence belongs to the TatB family. As to quaternary structure, the Tat system comprises two distinct complexes: a TatABC complex, containing multiple copies of TatA, TatB and TatC subunits, and a separate TatA complex, containing only TatA subunits. Substrates initially bind to the TatABC complex, which probably triggers association of the separate TatA complex to form the active translocon.

It localises to the cell inner membrane. In terms of biological role, part of the twin-arginine translocation (Tat) system that transports large folded proteins containing a characteristic twin-arginine motif in their signal peptide across membranes. Together with TatC, TatB is part of a receptor directly interacting with Tat signal peptides. TatB may form an oligomeric binding site that transiently accommodates folded Tat precursor proteins before their translocation. This is Sec-independent protein translocase protein TatB from Acinetobacter baylyi (strain ATCC 33305 / BD413 / ADP1).